The chain runs to 193 residues: MQSVKCVIVGDGAVGKTCLLVSYTTNAFPTEYVPTVFDNYSATVMVDSRPINLGLWDTAGQEDYDRIRPLSYPQTDVFLLCFSVVSPPSFENISSKWKPEVSHHCPNAPCLLIGTKIDIRDEQTQTNKTCDKKIEPITSEQGEAKCKDIGALKYIECSALTQKNLRYVFDEAVRAVININKKEKIKRKSCLIF.

A13, G15, K16, T17, C18, Y32, T35, G60, K116, D118, and A159 together coordinate GTP. Residue T17 participates in Mg(2+) binding. 2 consecutive short sequence motifs (switch) follow at residues 26 to 37 (NAFPTEYVPTVF) and 57 to 75 (DTAGQEDYDRIRPLSYPQT). T35 lines the Mg(2+) pocket. A Cysteine methyl ester modification is found at C190. C190 carries the S-geranylgeranyl cysteine lipid modification. A propeptide spans 191 to 193 (LIF) (removed in mature form).

This sequence belongs to the small GTPase superfamily. Rho family. The cofactor is Mg(2+).

It localises to the cell membrane. The protein localises to the cytoplasm. It is found in the cytoskeleton. It catalyses the reaction GTP + H2O = GDP + phosphate + H(+). Its activity is regulated as follows. Regulated by guanine nucleotide exchange factors (GEFs) which promote the exchange of bound GDP for free GTP, GTPase activating proteins (GAPs) which increase the GTP hydrolysis activity, and GDP dissociation inhibitors which inhibit the dissociation of the nucleotide from the GTPase. Functionally, small GTPase which cycles between active GTP-bound and inactive GDP-bound states. The sequence is that of Rho-related protein racB from Entamoeba histolytica (strain ATCC 30459 / HM-1:IMSS / ABRM).